Reading from the N-terminus, the 469-residue chain is 3-isopropylmalate dehydratase large subunit (469 aa).

[4Fe-4S] cluster-binding residues include Cys350, Cys410, and Cys413.

This sequence belongs to the aconitase/IPM isomerase family. LeuC type 1 subfamily. Heterodimer of LeuC and LeuD. The cofactor is [4Fe-4S] cluster.

It carries out the reaction (2R,3S)-3-isopropylmalate = (2S)-2-isopropylmalate. The protein operates within amino-acid biosynthesis; L-leucine biosynthesis; L-leucine from 3-methyl-2-oxobutanoate: step 2/4. Its function is as follows. Catalyzes the isomerization between 2-isopropylmalate and 3-isopropylmalate, via the formation of 2-isopropylmaleate. The chain is 3-isopropylmalate dehydratase large subunit from Brucella anthropi (strain ATCC 49188 / DSM 6882 / CCUG 24695 / JCM 21032 / LMG 3331 / NBRC 15819 / NCTC 12168 / Alc 37) (Ochrobactrum anthropi).